A 354-amino-acid polypeptide reads, in one-letter code: Phosphatidylserine decarboxylase proenzyme (354 aa).

Residues 18-36 traverse the membrane as a helical segment; that stretch reads YLITGVTILSFILMFQYKY. Catalysis depends on charge relay system; for autoendoproteolytic cleavage activity residues aspartate 139, histidine 198, and serine 308. Serine 308 serves as the catalytic Schiff-base intermediate with substrate; via pyruvic acid; for decarboxylase activity. Serine 308 bears the Pyruvic acid (Ser); by autocatalysis mark.

This sequence belongs to the phosphatidylserine decarboxylase family. PSD-B subfamily. Eukaryotic type I sub-subfamily. Heterodimer of a large membrane-associated beta subunit and a small pyruvoyl-containing alpha subunit. Pyruvate serves as cofactor. In terms of processing, is synthesized initially as an inactive proenzyme. Formation of the active enzyme involves a self-maturation process in which the active site pyruvoyl group is generated from an internal serine residue via an autocatalytic post-translational modification. Two non-identical subunits are generated from the proenzyme in this reaction, and the pyruvate is formed at the N-terminus of the alpha chain, which is derived from the carboxyl end of the proenzyme. The autoendoproteolytic cleavage occurs by a canonical serine protease mechanism, in which the side chain hydroxyl group of the serine supplies its oxygen atom to form the C-terminus of the beta chain, while the remainder of the serine residue undergoes an oxidative deamination to produce ammonia and the pyruvoyl prosthetic group on the alpha chain. During this reaction, the Ser that is part of the protease active site of the proenzyme becomes the pyruvoyl prosthetic group, which constitutes an essential element of the active site of the mature decarboxylase.

It is found in the membrane. It localises to the endoplasmic reticulum membrane. It carries out the reaction a 1,2-diacyl-sn-glycero-3-phospho-L-serine + H(+) = a 1,2-diacyl-sn-glycero-3-phosphoethanolamine + CO2. It participates in phospholipid metabolism; phosphatidylethanolamine biosynthesis; phosphatidylethanolamine from CDP-diacylglycerol: step 2/2. With respect to regulation, protease activity is inhibited by PMSF. Catalyzes the formation of phosphatidylethanolamine (PtdEtn) from phosphatidylserine (PtdSer). Plays a central role in phospholipid metabolism and in the interorganelle trafficking of phosphatidylserine. The sequence is that of Phosphatidylserine decarboxylase proenzyme from Plasmodium knowlesi (strain H).